The chain runs to 122 residues: Large ribosomal subunit protein uL14 (122 aa).

It belongs to the universal ribosomal protein uL14 family. Part of the 50S ribosomal subunit. Forms a cluster with proteins L3 and L19. In the 70S ribosome, L14 and L19 interact and together make contacts with the 16S rRNA in bridges B5 and B8.

Binds to 23S rRNA. Forms part of two intersubunit bridges in the 70S ribosome. This is Large ribosomal subunit protein uL14 from Bradyrhizobium sp. (strain BTAi1 / ATCC BAA-1182).